A 293-amino-acid chain; its full sequence is Ribosomal protein L11 methyltransferase (293 aa).

Positions 145, 166, 188, and 230 each coordinate S-adenosyl-L-methionine.

The protein belongs to the methyltransferase superfamily. PrmA family.

It localises to the cytoplasm. The catalysed reaction is L-lysyl-[protein] + 3 S-adenosyl-L-methionine = N(6),N(6),N(6)-trimethyl-L-lysyl-[protein] + 3 S-adenosyl-L-homocysteine + 3 H(+). Functionally, methylates ribosomal protein L11. The chain is Ribosomal protein L11 methyltransferase from Escherichia coli (strain SMS-3-5 / SECEC).